Consider the following 179-residue polypeptide: Replication restart protein DnaT (179 aa).

The disordered stretch occupies residues 151–179 (SRASNGGQPKRDVNSVSEPDSHIPRGFRG). Residues 159 to 173 (PKRDVNSVSEPDSHI) show a composition bias toward basic and acidic residues.

It belongs to the DnaT family. Homooligomerizes. Interacts with PriB. Component of the replication restart primosome. Primosome assembly occurs via a 'hand-off' mechanism. PriA binds to replication forks, subsequently PriB then DnaT bind; DnaT then displaces ssDNA to generate the helicase loading substrate.

Functionally, involved in the restart of stalled replication forks, which reloads the replicative helicase on sites other than the origin of replication. Can function in multiple replication restart pathways. Displaces ssDNA from a PriB-ssDNA complex. Probably forms a spiral filament on ssDNA. This chain is Replication restart protein DnaT, found in Klebsiella pneumoniae (strain 342).